We begin with the raw amino-acid sequence, 784 residues long: Endonuclease MutS2 (784 aa).

335–342 (GPNTGGKT) provides a ligand contact to ATP. Positions 527-546 (ERSKKQAEEDEARAHSAREE) are disordered. The Smr domain maps to 709-784 (LDLRGERYED…GTGVTVVELK (76 aa)).

It belongs to the DNA mismatch repair MutS family. MutS2 subfamily. As to quaternary structure, homodimer. Binds to stalled ribosomes, contacting rRNA.

Its function is as follows. Endonuclease that is involved in the suppression of homologous recombination and thus may have a key role in the control of bacterial genetic diversity. In terms of biological role, acts as a ribosome collision sensor, splitting the ribosome into its 2 subunits. Detects stalled/collided 70S ribosomes which it binds and splits by an ATP-hydrolysis driven conformational change. Acts upstream of the ribosome quality control system (RQC), a ribosome-associated complex that mediates the extraction of incompletely synthesized nascent chains from stalled ribosomes and their subsequent degradation. Probably generates substrates for RQC. This is Endonuclease MutS2 from Geobacillus thermodenitrificans (strain NG80-2).